The sequence spans 213 residues: Cysteine dioxygenase (213 aa).

Residues histidine 100, histidine 102, and histidine 160 each contribute to the Fe cation site. A cross-link (3'-(S-cysteinyl)-tyrosine (Cys-Tyr)) is located at residues 107–177 (CVMKVLKGSL…TNFAISLHLY (71 aa)).

It belongs to the cysteine dioxygenase family. The cofactor is Fe cation. The thioether cross-link between Cys-107 and Tyr-177 plays a structural role through stabilizing the Fe(2+) ion, and prevents the production of highly damaging free hydroxyl radicals by holding the oxygen radical via hydroxyl hydrogen.

It catalyses the reaction L-cysteine + O2 = 3-sulfino-L-alanine + H(+). This chain is Cysteine dioxygenase (CDO1), found in Ajellomyces capsulatus (strain G186AR / H82 / ATCC MYA-2454 / RMSCC 2432) (Darling's disease fungus).